We begin with the raw amino-acid sequence, 395 residues long: Gastric triacylglycerol lipase (395 aa).

The first 18 residues, 1-18 (MWLLLITSVISTFGGAHG), serve as a signal peptide directing secretion. Asparagine 33, asparagine 68, and asparagine 98 each carry an N-linked (GlcNAc...) asparagine glycan. Residues 77-376 (PVVYLQHGLI…LAYNHLDFIW (300 aa)) enclose the AB hydrolase-1 domain. Residue serine 171 is the Nucleophile of the active site. A disulfide bridge links cysteine 245 with cysteine 254. N-linked (GlcNAc...) asparagine glycosylation is present at asparagine 270. Residues aspartate 342 and histidine 371 each act as charge relay system in the active site.

Belongs to the AB hydrolase superfamily. Lipase family. As to expression, secreted by the serous (von Ebner's) glands at the back of the rat tongue.

The protein localises to the secreted. The catalysed reaction is a triacylglycerol + H2O = a diacylglycerol + a fatty acid + H(+). It carries out the reaction 1,2,3-tri-(9Z-octadecenoyl)-glycerol + H2O = 1,2-di-(9Z-octadecenoyl)-sn-glycerol + (9Z)-octadecenoate + H(+). The enzyme catalyses 1,2,3-trioctanoylglycerol + H2O = 1,2-dioctanoyl-sn-glycerol + octanoate + H(+). In terms of biological role, catalyzes the hydrolysis of triacylglycerols to yield free fatty acids, diacylglycerol, monoacylglycerol, and glycerol. Shows a preferential hydrolysis at the sn-3 position of triacylglycerol. This is Gastric triacylglycerol lipase (Lipf) from Rattus norvegicus (Rat).